The primary structure comprises 243 residues: Anti-H(O) lectin 1 (243 aa).

N-linked (GlcNAc...) asparagine; partial glycosylation occurs at Asn-10. Asn-116 carries an N-linked (GlcNAc...) asparagine glycan. 2 residues coordinate Mn(2+): Glu-126 and Asp-128. Positions 128, 135, and 138 each coordinate Ca(2+). Mn(2+) is bound by residues Asp-138 and His-143.

It belongs to the leguminous lectin family.

L-fucose specific lectin. This chain is Anti-H(O) lectin 1, found in Ulex europaeus (Furze).